The chain runs to 638 residues: Neuroendocrine convertase 2 (638 aa).

Positions 1-25 (MKGGCVSQWKAAAGFLFCVMVFASA) are cleaved as a signal peptide. A propeptide spanning residues 26-109 (ERPVFTNHFL…QQEGFDRKKR (84 aa)) is cleaved from the precursor. In terms of domain architecture, Peptidase S8 spans 129–453 (QWYLINTGQA…YGVLDAGAMV (325 aa)). Residues Asp-167 and His-208 each act as charge relay system in the active site. 2 cysteine pairs are disulfide-bonded: Cys-225-Cys-376 and Cys-317-Cys-347. A glycan (N-linked (GlcNAc...) asparagine) is linked at Asn-375. Residue Ser-384 is the Charge relay system of the active site. The 137-residue stretch at 461-597 (TVPERFHCVG…TLMLHGTQSA (137 aa)) folds into the P/Homo B domain. A disulfide bridge links Cys-468 with Cys-494. N-linked (GlcNAc...) asparagine glycosylation is found at Asn-514 and Asn-524.

It belongs to the peptidase S8 family. Furin subfamily.

Its subcellular location is the cytoplasmic vesicle. It is found in the secretory vesicle. It localises to the secreted. It catalyses the reaction Release of protein hormones and neuropeptides from their precursors, generally by hydrolysis of -Lys-Arg-|- bonds.. Serine endopeptidase which is involved in the processing of hormone and other protein precursors at sites comprised of pairs of basic amino acid residues. Responsible for the release of glucagon from proglucagon in pancreatic A cells. This Pongo abelii (Sumatran orangutan) protein is Neuroendocrine convertase 2 (PCSK2).